The sequence spans 187 residues: Large ribosomal subunit protein uL10 (187 aa).

Belongs to the universal ribosomal protein uL10 family. In terms of assembly, part of the ribosomal stalk of the 50S ribosomal subunit. The N-terminus interacts with L11 and the large rRNA to form the base of the stalk. The C-terminus forms an elongated spine to which L12 dimers bind in a sequential fashion forming a multimeric L10(L12)X complex.

Its function is as follows. Forms part of the ribosomal stalk, playing a central role in the interaction of the ribosome with GTP-bound translation factors. The sequence is that of Large ribosomal subunit protein uL10 from Synechococcus sp. (strain JA-3-3Ab) (Cyanobacteria bacterium Yellowstone A-Prime).